The following is a 67-amino-acid chain: Prokaryotic ubiquitin-like protein Pup (67 aa).

Residues 1–13 (MAGQEQQQPQSRD) are compositionally biased toward low complexity. Residues 1–48 (MAGQEQQQPQSRDSQVDEDIPEAPPAPPEAQASASTEGVDDLLDEIDG) are disordered. The tract at residues 25–61 (PAPPEAQASASTEGVDDLLDEIDGVLESNAEEFVRAF) is ARC ATPase binding. A compositionally biased stretch (acidic residues) spans 38–48 (GVDDLLDEIDG). Gln67 carries the post-translational modification Deamidated glutamine. Gln67 participates in a covalent cross-link: Isoglutamyl lysine isopeptide (Gln-Lys) (interchain with K-? in acceptor proteins).

It belongs to the prokaryotic ubiquitin-like protein family. As to quaternary structure, strongly interacts with the proteasome-associated ATPase ARC through a hydrophobic interface; the interacting region of Pup lies in its C-terminal half. There is one Pup binding site per ARC hexamer ring. Is modified by deamidation of its C-terminal glutamine to glutamate by the deamidase Dop, a prerequisite to the subsequent pupylation process.

The protein operates within protein degradation; proteasomal Pup-dependent pathway. In terms of biological role, protein modifier that is covalently attached to lysine residues of substrate proteins, thereby targeting them for proteasomal degradation. The tagging system is termed pupylation. In Pseudarthrobacter chlorophenolicus (strain ATCC 700700 / DSM 12829 / CIP 107037 / JCM 12360 / KCTC 9906 / NCIMB 13794 / A6) (Arthrobacter chlorophenolicus), this protein is Prokaryotic ubiquitin-like protein Pup.